Here is a 154-residue protein sequence, read N- to C-terminus: Ribosomal RNA large subunit methyltransferase H (154 aa).

Residues Gly-103 and 122–127 contribute to the S-adenosyl-L-methionine site; that span reads FSKLTF.

The protein belongs to the RNA methyltransferase RlmH family. As to quaternary structure, homodimer.

Its subcellular location is the cytoplasm. It catalyses the reaction pseudouridine(1915) in 23S rRNA + S-adenosyl-L-methionine = N(3)-methylpseudouridine(1915) in 23S rRNA + S-adenosyl-L-homocysteine + H(+). Its function is as follows. Specifically methylates the pseudouridine at position 1915 (m3Psi1915) in 23S rRNA. In Caldicellulosiruptor bescii (strain ATCC BAA-1888 / DSM 6725 / KCTC 15123 / Z-1320) (Anaerocellum thermophilum), this protein is Ribosomal RNA large subunit methyltransferase H.